The sequence spans 171 residues: Transcription antitermination protein NusB (171 aa).

This sequence belongs to the NusB family.

Functionally, involved in transcription antitermination. Required for transcription of ribosomal RNA (rRNA) genes. Binds specifically to the boxA antiterminator sequence of the ribosomal RNA (rrn) operons. This Brucella abortus (strain S19) protein is Transcription antitermination protein NusB.